The primary structure comprises 85 residues: U4-theraphotoxin-Hhn1a (85 aa).

A signal peptide spans 1-22; it reads MKVTLIAILTCAAVLVLHTTAA. The propeptide occupies 23–48; sequence EELEAESQLMEVGMPDTELEAVDEER. 3 disulfide bridges follow: Cys-52–Cys-66, Cys-56–Cys-77, and Cys-71–Cys-82.

Belongs to the neurotoxin 12 (Hwtx-2) family. 02 (Hwtx-2) subfamily. In terms of assembly, monomer. As to expression, expressed by the venom gland.

The protein resides in the secreted. Its function is as follows. Neurotoxin active on both insects and mammals. This is U4-theraphotoxin-Hhn1a from Cyriopagopus hainanus (Chinese bird spider).